We begin with the raw amino-acid sequence, 105 residues long: Guanidinium exporter (105 aa).

A helical transmembrane segment spans residues 1 to 21; it reads MSWIILVIAGLLEVVWAVGLK. At 22 to 28 the chain is on the cytoplasmic side; sequence YTHGFSR. A helical transmembrane segment spans residues 29 to 49; that stretch reads LTPSVITVTAMIVSLALLAWA. Over 50 to 57 the chain is Periplasmic; sequence MKSLPVGT. Residues 58–78 traverse the membrane as a helical segment; the sequence is AYAVWTGIGAVGAAITGIVLL. Residues 79 to 81 lie on the Cytoplasmic side of the membrane; it reads GES. Residues 82-102 traverse the membrane as a helical segment; the sequence is ANPMRLASLALIVLGIIGLKL. Over 103 to 105 the chain is Periplasmic; it reads STH.

The protein belongs to the drug/metabolite transporter (DMT) superfamily. Small multidrug resistance (SMR) (TC 2.A.7.1) family. Gdx/SugE subfamily.

The protein resides in the cell inner membrane. Guanidinium ion exporter. Couples guanidinium export to the proton motive force, exchanging one guanidinium ion for two protons. This chain is Guanidinium exporter, found in Escherichia coli O6:H1 (strain CFT073 / ATCC 700928 / UPEC).